The following is a 2359-amino-acid chain: Neuron navigator 3 (2359 aa).

One can recognise a Calponin-homology (CH) domain in the interval 77 to 184 (IEDSKIYTDW…LFFSLSRYKQ (108 aa)). 4 stretches are compositionally biased toward polar residues: residues 204-226 (THTAPQSEASQAKTQQDMQSSLT), 233-243 (SKHSGIATSQK), 257-279 (ASSSNKAQGASNLNRRSQSFNSI), and 300-317 (QPSSGINGNTQPPSTSGQ). 2 disordered regions span residues 204–623 (THTA…QQQH) and 641–660 (ENEGTSLPPADSCTSPTKMD). Over residues 318-329 (PPASAIPSPSAS) the composition is skewed to low complexity. Residues 335-352 (KSMNVKHSATSTMLTVKQ) are compositionally biased toward polar residues. Composition is skewed to low complexity over residues 353–363 (PSPATSPTPSS) and 427–439 (NSGLNSGGSTNSS). Residues 465–491 (PKEKEEKTRDKNKACAEKSGKEEKDQV) show a composition bias toward basic and acidic residues. Over residues 522-536 (IPSSSGIPKPGSKVP) the composition is skewed to low complexity. A compositionally biased stretch (polar residues) spans 592-623 (ASPSSSCVMQVTHSSGQSPGNGAVQLPQQQQH). A coiled-coil region spans residues 680 to 708 (EARRMRTVKNIADLRQNLEETMSSLRGTQ). Disordered regions lie at residues 878–1315 (ADSW…SPLF), 1413–1472 (LSES…AMSS), 1653–1758 (GALN…KPSQ), and 1829–1855 (ETGNTAKPARPPSDSSSTASSSSSRQS). Low complexity-rich tracts occupy residues 883 to 896 (DSSSVSSGLSDTLD) and 904 to 916 (NTTSSISSYSNIT). Residues 917 to 926 (VPSRKNTQLK) show a composition bias toward polar residues. A compositionally biased stretch (basic and acidic residues) spans 943–960 (EELKKAEGDCDSHGDGAA). Polar residues-rich tracts occupy residues 978 to 989 (QKASLSVSQTGS) and 997 to 1013 (QGGTPATARQKTSTSAL). A compositionally biased stretch (basic and acidic residues) spans 1017 to 1029 (GKTDDAKASEKGK). Low complexity-rich tracts occupy residues 1077–1095 (GASTMITSSGATITSGSAT) and 1160–1173 (SSTSSIDSNVSSKS). The span at 1190–1199 (GRSSPVTVNQ) shows a compositional bias: polar residues. Low complexity-rich tracts occupy residues 1209–1229 (VSDSESVSLSGSPKSSPTSAS), 1256–1266 (GAKAGGKSASA), and 1274–1285 (SSSVVLSPSTSL). Gly residues predominate over residues 1299–1308 (GSMGSAGGLS). Over residues 1439-1448 (NQEEGKEWLR) the composition is skewed to basic and acidic residues. The segment covering 1449-1461 (SHSTGGLQDTGNQ) has biased composition (polar residues). A phosphoserine mark is found at Ser-1462 and Ser-1466. Over residues 1462–1472 (SPLVSPSAMSS) the composition is skewed to low complexity. Residues 1565-1656 (AEEKAHSEQI…AQAAIQGALN (92 aa)) are a coiled coil. 2 stretches are compositionally biased toward low complexity: residues 1675-1692 (SVSSINSATSHSSIGSGN) and 1749-1758 (SGSSSMKPSQ). Residues 1768–1835 (EAEAEIILQL…LKAETGNTAK (68 aa)) adopt a coiled-coil conformation. Low complexity predominate over residues 1841 to 1855 (SDSSSTASSSSSRQS).

The protein belongs to the Nav/unc-53 family. As to expression, present in neurons from central and peripheral nervous systems (at protein level). Highly expressed in brain cortex, midbrain, cerebellum and hippocampus.

It localises to the nucleus outer membrane. In terms of biological role, plays a role in cell migration. May be involved in neuron regeneration. May regulate IL2 production by T-cells. This Mus musculus (Mouse) protein is Neuron navigator 3 (Nav3).